Here is a 381-residue protein sequence, read N- to C-terminus: Early boundary activity protein 2 (381 aa).

Positions 210–245 (NDAEDVPAPPSKRPRHMSTSSSESHIPDTASEKDEK) are disordered. A BEN domain is found at 268–365 (PNGTQITAHQ…TKCADTAKKY (98 aa)).

The heterotrimeric Elba complex consists of Elba1, Elba2 and Elba3.

It is found in the nucleus. The heterotrimeric Elba complex is required for chromatin domain boundary function during early embryogenesis. It binds to a 8-bp sequence 5'-CCAATAAG-3' in the Fab-7 insulator or boundary element in the bithorax complex and contributes to its insulator or boundary activity. Elba2 can act as a transcriptional repressor and binds the palindromic sequence 5'-CCAATTGG-3' to mediate transcriptional repression. This is Early boundary activity protein 2 from Drosophila melanogaster (Fruit fly).